Reading from the N-terminus, the 427-residue chain is MSTSFENKATNRGVVTFTISQDKIKPALDQAFNKVKKDLTAPGFRKGHMPRTVFNQKFGEEALYEEALNSILPAAYEEAVAELELDVVTQPKVDVKSMEKGKDWEITAEVVTKPEVKLGDYKNLEVSVEESKEVTDAEVDEKIERERNNLAELVLKEDAAVEGDTVVIDFVGSVDGVEFDGGKGDNFSLELGSGQFIPGFEDQLVGKKAGETVKVNVTFPEDYQSADLAGKDATFVTTIHEVKAKEVPELDDELAKDIDEEVETLDELKAKYRKELEATKETAYNDAVEAAAIDLAVANAEIVELPEEMIHDEVQRAMQEFMGNMQRQGISSEMYFQLTGTTEEDLRKQYEADADKRVKTNLVIEAVAKAEGFEATDEEIEKEISDLATEYKMEAEQVRSLLSPDMLKHDIAMKKAVNVITDSAKVK.

A PPIase FKBP-type domain is found at G163–P248.

The protein belongs to the FKBP-type PPIase family. Tig subfamily.

The protein resides in the cytoplasm. The catalysed reaction is [protein]-peptidylproline (omega=180) = [protein]-peptidylproline (omega=0). Functionally, involved in protein export. Acts as a chaperone by maintaining the newly synthesized protein in an open conformation. Functions as a peptidyl-prolyl cis-trans isomerase. The protein is Trigger factor of Streptococcus mutans serotype c (strain ATCC 700610 / UA159).